Here is a 258-residue protein sequence, read N- to C-terminus: Snake venom serine protease PA (258 aa).

The N-terminal stretch at 1–18 (MVLIRVLANLLILQLSYA) is a signal peptide. The propeptide occupies 19–24 (QKSPEL). The 225-residue stretch at 25–249 (VVGGDECNIN…YNDWIKSIIA (225 aa)) folds into the Peptidase S1 domain. 6 disulfides stabilise this stretch: Cys-31–Cys-163, Cys-50–Cys-66, Cys-98–Cys-256, Cys-142–Cys-210, Cys-174–Cys-189, and Cys-200–Cys-225. N-linked (GlcNAc...) asparagine glycosylation is present at Asn-44. Catalysis depends on charge relay system residues His-65 and Asp-110. Catalysis depends on Ser-204, which acts as the Charge relay system.

The protein belongs to the peptidase S1 family. Snake venom subfamily. Monomer. In terms of tissue distribution, expressed by the venom gland.

It is found in the secreted. Snake venom serine protease that may act in the hemostasis system of the prey. The protein is Snake venom serine protease PA of Trimeresurus stejnegeri (Chinese green tree viper).